A 245-amino-acid chain; its full sequence is 1-(5-phosphoribosyl)-5-[(5-phosphoribosylamino)methylideneamino] imidazole-4-carboxamide isomerase (245 aa).

D7 (proton acceptor) is an active-site residue. The Proton donor role is filled by D129.

Belongs to the HisA/HisF family.

The protein resides in the cytoplasm. The enzyme catalyses 1-(5-phospho-beta-D-ribosyl)-5-[(5-phospho-beta-D-ribosylamino)methylideneamino]imidazole-4-carboxamide = 5-[(5-phospho-1-deoxy-D-ribulos-1-ylimino)methylamino]-1-(5-phospho-beta-D-ribosyl)imidazole-4-carboxamide. It participates in amino-acid biosynthesis; L-histidine biosynthesis; L-histidine from 5-phospho-alpha-D-ribose 1-diphosphate: step 4/9. The polypeptide is 1-(5-phosphoribosyl)-5-[(5-phosphoribosylamino)methylideneamino] imidazole-4-carboxamide isomerase (Escherichia coli O127:H6 (strain E2348/69 / EPEC)).